We begin with the raw amino-acid sequence, 218 residues long: Ribonuclease T (218 aa).

An Exonuclease domain is found at 20 to 194 (VVIDVETAGF…YDAERTAELF (175 aa)). Mg(2+) contacts are provided by Asp-23, Glu-25, His-181, and Asp-186. His-181 serves as the catalytic Proton donor/acceptor.

It belongs to the RNase T family. In terms of assembly, homodimer. Mg(2+) serves as cofactor.

Functionally, trims short 3' overhangs of a variety of RNA species, leaving a one or two nucleotide 3' overhang. Responsible for the end-turnover of tRNA: specifically removes the terminal AMP residue from uncharged tRNA (tRNA-C-C-A). Also appears to be involved in tRNA biosynthesis. In Baumannia cicadellinicola subsp. Homalodisca coagulata, this protein is Ribonuclease T.